Here is a 267-residue protein sequence, read N- to C-terminus: Digeranylgeranylglyceryl phosphate synthase (267 aa).

7 consecutive transmembrane segments (helical) span residues 10 to 30 (ANCV…GALL), 33 to 53 (LHTP…GNAI), 80 to 100 (AALI…GLIN), 104 to 121 (LALA…AARL), 139 to 159 (TFLF…LSIL), 198 to 218 (VLAS…PLGI), and 247 to 267 (QRWI…GYHI).

It belongs to the UbiA prenyltransferase family. DGGGP synthase subfamily. It depends on Mg(2+) as a cofactor.

It localises to the cell membrane. It carries out the reaction sn-3-O-(geranylgeranyl)glycerol 1-phosphate + (2E,6E,10E)-geranylgeranyl diphosphate = 2,3-bis-O-(geranylgeranyl)-sn-glycerol 1-phosphate + diphosphate. Its pathway is membrane lipid metabolism; glycerophospholipid metabolism. In terms of biological role, prenyltransferase that catalyzes the transfer of the geranylgeranyl moiety of geranylgeranyl diphosphate (GGPP) to the C2 hydroxyl of (S)-3-O-geranylgeranylglyceryl phosphate (GGGP). This reaction is the second ether-bond-formation step in the biosynthesis of archaeal membrane lipids. The protein is Digeranylgeranylglyceryl phosphate synthase of Methanothrix thermoacetophila (strain DSM 6194 / JCM 14653 / NBRC 101360 / PT) (Methanosaeta thermophila).